Reading from the N-terminus, the 691-residue chain is Elongation factor G (691 aa).

A tr-type G domain is found at 8–283; the sequence is EKQRNIGIMA…AVVQYLPSPL (276 aa). GTP is bound by residues 17–24, 81–85, and 135–138; these read AHIDAGKT, DTPGH, and NKMD.

The protein belongs to the TRAFAC class translation factor GTPase superfamily. Classic translation factor GTPase family. EF-G/EF-2 subfamily.

It is found in the cytoplasm. In terms of biological role, catalyzes the GTP-dependent ribosomal translocation step during translation elongation. During this step, the ribosome changes from the pre-translocational (PRE) to the post-translocational (POST) state as the newly formed A-site-bound peptidyl-tRNA and P-site-bound deacylated tRNA move to the P and E sites, respectively. Catalyzes the coordinated movement of the two tRNA molecules, the mRNA and conformational changes in the ribosome. The protein is Elongation factor G of Lawsonia intracellularis (strain PHE/MN1-00).